Consider the following 123-residue polypeptide: UPF0382 membrane protein YwdK (123 aa).

A run of 4 helical transmembrane segments spans residues 3 to 23 (VFII…AFGA), 49 to 69 (ALGL…GSVT), 71 to 91 (AGWL…ILSV), and 96 to 116 (ILGA…IMIV).

This sequence belongs to the UPF0382 family.

Its subcellular location is the cell membrane. This Bacillus subtilis (strain 168) protein is UPF0382 membrane protein YwdK (ywdK).